Here is a 535-residue protein sequence, read N- to C-terminus: CTP synthase (535 aa).

An amidoligase domain region spans residues 1 to 270; sequence MSKNTKYVFV…DRLVCEKLGL (270 aa). Serine 16 serves as a coordination point for CTP. Serine 16 provides a ligand contact to UTP. Position 17–22 (17–22) interacts with ATP; sequence SLGKGI. Tyrosine 57 provides a ligand contact to L-glutamine. Aspartate 74 serves as a coordination point for ATP. Mg(2+) is bound by residues aspartate 74 and glutamate 144. CTP is bound by residues 151–153, 191–196, and lysine 227; these read DIE and KTKPTQ. Residues 191-196 and lysine 227 each bind UTP; that span reads KTKPTQ. The Glutamine amidotransferase type-1 domain occupies 295 to 535; sequence KIALVGKYVE…GFVGAALNNK (241 aa). Glycine 357 contacts L-glutamine. Catalysis depends on cysteine 384, which acts as the Nucleophile; for glutamine hydrolysis. Residues 385–388, glutamate 408, and arginine 465 each bind L-glutamine; that span reads LGMQ. Residues histidine 510 and glutamate 512 contribute to the active site.

Belongs to the CTP synthase family. Homotetramer.

The catalysed reaction is UTP + L-glutamine + ATP + H2O = CTP + L-glutamate + ADP + phosphate + 2 H(+). The enzyme catalyses L-glutamine + H2O = L-glutamate + NH4(+). It catalyses the reaction UTP + NH4(+) + ATP = CTP + ADP + phosphate + 2 H(+). It functions in the pathway pyrimidine metabolism; CTP biosynthesis via de novo pathway; CTP from UDP: step 2/2. With respect to regulation, allosterically activated by GTP, when glutamine is the substrate; GTP has no effect on the reaction when ammonia is the substrate. The allosteric effector GTP functions by stabilizing the protein conformation that binds the tetrahedral intermediate(s) formed during glutamine hydrolysis. Inhibited by the product CTP, via allosteric rather than competitive inhibition. Catalyzes the ATP-dependent amination of UTP to CTP with either L-glutamine or ammonia as the source of nitrogen. Regulates intracellular CTP levels through interactions with the four ribonucleotide triphosphates. The chain is CTP synthase from Clostridium perfringens (strain ATCC 13124 / DSM 756 / JCM 1290 / NCIMB 6125 / NCTC 8237 / Type A).